Here is a 378-residue protein sequence, read N- to C-terminus: Probable G-protein coupled receptor frpr-1 (378 aa).

Transmembrane regions (helical) follow at residues 47-67 (LVVI…GNAL), 85-105 (LFAL…LFFL), 120-140 (AVLS…SVFI), 180-200 (VIVC…YNSP), 243-263 (TIVM…AIVI), 277-297 (IITL…PLTV), and 315-337 (SNLM…GSNF).

Belongs to the G-protein coupled receptor 1 family.

The protein localises to the cell membrane. The polypeptide is Probable G-protein coupled receptor frpr-1 (Caenorhabditis elegans).